The following is a 798-amino-acid chain: uncharacterized protein (798 aa).

The interval 432-573 (KLTDNLSNKS…KNKAYRGRRV (142 aa)) is disordered. Low complexity-rich tracts occupy residues 438–449 (SNKSSNDNTSET), 456–465 (RSSNSRNSDN), 473–487 (SKTQSSDSSKSSRIP), and 495–510 (STNSVVSVGSTGSDVY). Polar residues predominate over residues 519 to 529 (PSRSTYKSRTI). A compositionally biased stretch (low complexity) spans 535–547 (ESSPVSSRTSSPV). Over residues 548-562 (DDSRLKQSRISEDKP) the composition is skewed to basic and acidic residues. Over residues 563 to 572 (RKNKAYRGRR) the composition is skewed to basic residues.

The protein localises to the virion. This is an uncharacterized protein from Acanthamoeba polyphaga (Amoeba).